The primary structure comprises 632 residues: 1-deoxy-D-xylulose-5-phosphate synthase (632 aa).

Residues His-78 and 119–121 (AHS) each bind thiamine diphosphate. Residue Asp-150 coordinates Mg(2+). Residues 151–152 (GA), Asn-179, Tyr-286, and Glu-368 each bind thiamine diphosphate. Residue Asn-179 participates in Mg(2+) binding.

Belongs to the transketolase family. DXPS subfamily. In terms of assembly, homodimer. The cofactor is Mg(2+). Thiamine diphosphate is required as a cofactor.

It catalyses the reaction D-glyceraldehyde 3-phosphate + pyruvate + H(+) = 1-deoxy-D-xylulose 5-phosphate + CO2. Its pathway is metabolic intermediate biosynthesis; 1-deoxy-D-xylulose 5-phosphate biosynthesis; 1-deoxy-D-xylulose 5-phosphate from D-glyceraldehyde 3-phosphate and pyruvate: step 1/1. In terms of biological role, catalyzes the acyloin condensation reaction between C atoms 2 and 3 of pyruvate and glyceraldehyde 3-phosphate to yield 1-deoxy-D-xylulose-5-phosphate (DXP). This chain is 1-deoxy-D-xylulose-5-phosphate synthase, found in Albidiferax ferrireducens (strain ATCC BAA-621 / DSM 15236 / T118) (Rhodoferax ferrireducens).